The primary structure comprises 124 residues: Small ribosomal subunit protein uS12 (124 aa).

Residue D89 is modified to 3-methylthioaspartic acid.

It belongs to the universal ribosomal protein uS12 family. As to quaternary structure, part of the 30S ribosomal subunit. Contacts proteins S8 and S17. May interact with IF1 in the 30S initiation complex.

Its function is as follows. With S4 and S5 plays an important role in translational accuracy. Interacts with and stabilizes bases of the 16S rRNA that are involved in tRNA selection in the A site and with the mRNA backbone. Located at the interface of the 30S and 50S subunits, it traverses the body of the 30S subunit contacting proteins on the other side and probably holding the rRNA structure together. The combined cluster of proteins S8, S12 and S17 appears to hold together the shoulder and platform of the 30S subunit. The polypeptide is Small ribosomal subunit protein uS12 (Shewanella loihica (strain ATCC BAA-1088 / PV-4)).